The chain runs to 272 residues: Phosphate import ATP-binding protein PstB 1 (272 aa).

Positions 26–267 (LEIRNLDLRY…PKKRKTEDYI (242 aa)) constitute an ABC transporter domain. 58 to 65 (GPSGCGKS) is an ATP binding site.

This sequence belongs to the ABC transporter superfamily. Phosphate importer (TC 3.A.1.7) family. In terms of assembly, the complex is composed of two ATP-binding proteins (PstB), two transmembrane proteins (PstC and PstA) and a solute-binding protein (PstS).

It is found in the cell inner membrane. The enzyme catalyses phosphate(out) + ATP + H2O = ADP + 2 phosphate(in) + H(+). Its function is as follows. Part of the ABC transporter complex PstSACB involved in phosphate import. Responsible for energy coupling to the transport system. This is Phosphate import ATP-binding protein PstB 1 from Shewanella oneidensis (strain ATCC 700550 / JCM 31522 / CIP 106686 / LMG 19005 / NCIMB 14063 / MR-1).